A 128-amino-acid polypeptide reads, in one-letter code: Large ribosomal subunit protein eL32 (128 aa).

This sequence belongs to the eukaryotic ribosomal protein eL32 family.

This Thermoplasma volcanium (strain ATCC 51530 / DSM 4299 / JCM 9571 / NBRC 15438 / GSS1) protein is Large ribosomal subunit protein eL32 (rpl32e).